The chain runs to 373 residues: Glutamate 5-kinase (373 aa).

Lys-12 contributes to the ATP binding site. Substrate is bound by residues Ser-52, Asp-139, and Asn-154. Residue 216–222 coordinates ATP; the sequence is TGGMVTK. Residues 281–359 enclose the PUA domain; it reads RGNICIDDGA…DEINTVLAGN (79 aa).

The protein belongs to the glutamate 5-kinase family.

The protein localises to the cytoplasm. The catalysed reaction is L-glutamate + ATP = L-glutamyl 5-phosphate + ADP. It participates in amino-acid biosynthesis; L-proline biosynthesis; L-glutamate 5-semialdehyde from L-glutamate: step 1/2. Catalyzes the transfer of a phosphate group to glutamate to form L-glutamate 5-phosphate. This is Glutamate 5-kinase from Dehalococcoides mccartyi (strain ATCC BAA-2266 / KCTC 15142 / 195) (Dehalococcoides ethenogenes (strain 195)).